A 37-amino-acid chain; its full sequence is Large ribosomal subunit protein bL36c (37 aa).

It belongs to the bacterial ribosomal protein bL36 family.

The protein resides in the plastid. It localises to the chloroplast. This Lotus japonicus (Lotus corniculatus var. japonicus) protein is Large ribosomal subunit protein bL36c.